Consider the following 262-residue polypeptide: Ribose-5-phosphate isomerase A (262 aa).

Substrate-binding positions include 33 to 36 (TGST), 89 to 92 (DGAD), and 102 to 105 (KGGG). Catalysis depends on E111, which acts as the Proton acceptor. Position 129 (K129) interacts with substrate.

It belongs to the ribose 5-phosphate isomerase family. As to quaternary structure, homodimer.

It carries out the reaction aldehydo-D-ribose 5-phosphate = D-ribulose 5-phosphate. It functions in the pathway carbohydrate degradation; pentose phosphate pathway; D-ribose 5-phosphate from D-ribulose 5-phosphate (non-oxidative stage): step 1/1. Functionally, catalyzes the reversible conversion of ribose-5-phosphate to ribulose 5-phosphate. This Ruegeria pomeroyi (strain ATCC 700808 / DSM 15171 / DSS-3) (Silicibacter pomeroyi) protein is Ribose-5-phosphate isomerase A.